The primary structure comprises 357 residues: UDP-N-acetylglucosamine--N-acetylmuramyl-(pentapeptide) pyrophosphoryl-undecaprenol N-acetylglucosamine transferase (357 aa).

UDP-N-acetyl-alpha-D-glucosamine-binding positions include 13–15, arginine 166, serine 197, and glutamine 292; that span reads SAG.

The protein belongs to the glycosyltransferase 28 family. MurG subfamily.

It localises to the cell membrane. The catalysed reaction is di-trans,octa-cis-undecaprenyl diphospho-N-acetyl-alpha-D-muramoyl-L-alanyl-D-glutamyl-meso-2,6-diaminopimeloyl-D-alanyl-D-alanine + UDP-N-acetyl-alpha-D-glucosamine = di-trans,octa-cis-undecaprenyl diphospho-[N-acetyl-alpha-D-glucosaminyl-(1-&gt;4)]-N-acetyl-alpha-D-muramoyl-L-alanyl-D-glutamyl-meso-2,6-diaminopimeloyl-D-alanyl-D-alanine + UDP + H(+). The protein operates within cell wall biogenesis; peptidoglycan biosynthesis. Functionally, cell wall formation. Catalyzes the transfer of a GlcNAc subunit on undecaprenyl-pyrophosphoryl-MurNAc-pentapeptide (lipid intermediate I) to form undecaprenyl-pyrophosphoryl-MurNAc-(pentapeptide)GlcNAc (lipid intermediate II). This Clostridium novyi (strain NT) protein is UDP-N-acetylglucosamine--N-acetylmuramyl-(pentapeptide) pyrophosphoryl-undecaprenol N-acetylglucosamine transferase.